Here is a 156-residue protein sequence, read N- to C-terminus: Small ribosomal subunit protein uS7 (156 aa).

Belongs to the universal ribosomal protein uS7 family. As to quaternary structure, part of the 30S ribosomal subunit. Contacts proteins S9 and S11.

One of the primary rRNA binding proteins, it binds directly to 16S rRNA where it nucleates assembly of the head domain of the 30S subunit. Is located at the subunit interface close to the decoding center, probably blocks exit of the E-site tRNA. In Aeromonas salmonicida (strain A449), this protein is Small ribosomal subunit protein uS7.